The sequence spans 362 residues: Talin rod domain-containing protein 1 (362 aa).

The disordered stretch occupies residues M1–S27. At A2 the chain carries N-acetylalanine. The span at P9–S27 shows a compositional bias: low complexity.

In terms of assembly, may homodimerize. Interacts with F-actin. As to expression, ubiquitous.

Functionally, actin-binding protein which may have an oncogenic function and regulates cell proliferation, migration and invasion in cancer cells. This Mus musculus (Mouse) protein is Talin rod domain-containing protein 1.